A 519-amino-acid chain; its full sequence is Histidine--tRNA ligase (519 aa).

The protein belongs to the class-II aminoacyl-tRNA synthetase family. In terms of assembly, homodimer.

Its subcellular location is the cytoplasm. It catalyses the reaction tRNA(His) + L-histidine + ATP = L-histidyl-tRNA(His) + AMP + diphosphate + H(+). This Rhodopseudomonas palustris (strain BisB18) protein is Histidine--tRNA ligase.